Here is a 63-residue protein sequence, read N- to C-terminus: Lantipeptide Flvbeta.a (63 aa).

Residues 1–28 (MSEKNMEKAGVVKADELDEMIDETTGGA) constitute a propeptide, cleaved by FlvT. Thr-30, Thr-33, Thr-38, and Thr-39 each carry 2,3-didehydrobutyrine; by FlvM2. Positions 43 to 49 (SKGLQNC) form a cross-link, lanthionine (Ser-Cys); by FlvM2. Thr-54 and Thr-55 each carry 2,3-didehydrobutyrine; by FlvM2.

Maturation of FlvA2 peptides involves the enzymatic conversion of Thr, and Ser into dehydrated AA and the formation of thioether bonds with cysteines. Modifications are processed by the flavecin synthetase FlvM2. This is followed by membrane translocation and cleavage of the modified precursor. In terms of processing, contains DL-lanthionine, when coepressed in E.coli with the flavecin synthetase FlvM2.

It is found in the secreted. In terms of biological role, lanthionine-containing peptide that does probably not show antibacterial activity, since its analog [+3]Flvbeta.a does not show antibacterial activity against M.luteus. Also does not show antibiotic activity when tested with [Del2]Flvalpha.a, an analog of Flvalpha.a, which is encoded by the same operon than Flvbeta.a. The bactericidal activity of lantibiotics is based on depolarization of energized bacterial cytoplasmic membranes, initiated by the formation of aqueous transmembrane pores. This is Lantipeptide Flvbeta.a from Ruminococcus flavefaciens.